The chain runs to 391 residues: Formate-dependent phosphoribosylglycinamide formyltransferase (391 aa).

N(1)-(5-phospho-beta-D-ribosyl)glycinamide-binding positions include 18 to 19 and glutamate 78; that span reads EL. ATP contacts are provided by residues arginine 110, lysine 151, 156–161, 191–194, and glutamate 199; these read SSGKGQ and EEFI. The region spanning 115 to 305 is the ATP-grasp domain; that stretch reads ELAAQQLGVR…EFELHLRAIL (191 aa). Glutamate 264 and glutamate 276 together coordinate Mg(2+). N(1)-(5-phospho-beta-D-ribosyl)glycinamide is bound by residues aspartate 283, lysine 353, and 360–361; that span reads RR.

It belongs to the PurK/PurT family. In terms of assembly, homodimer.

It carries out the reaction N(1)-(5-phospho-beta-D-ribosyl)glycinamide + formate + ATP = N(2)-formyl-N(1)-(5-phospho-beta-D-ribosyl)glycinamide + ADP + phosphate + H(+). It functions in the pathway purine metabolism; IMP biosynthesis via de novo pathway; N(2)-formyl-N(1)-(5-phospho-D-ribosyl)glycinamide from N(1)-(5-phospho-D-ribosyl)glycinamide (formate route): step 1/1. Its function is as follows. Involved in the de novo purine biosynthesis. Catalyzes the transfer of formate to 5-phospho-ribosyl-glycinamide (GAR), producing 5-phospho-ribosyl-N-formylglycinamide (FGAR). Formate is provided by PurU via hydrolysis of 10-formyl-tetrahydrofolate. In Synechocystis sp. (strain ATCC 27184 / PCC 6803 / Kazusa), this protein is Formate-dependent phosphoribosylglycinamide formyltransferase.